The primary structure comprises 456 residues: tRNA modification GTPase MnmE (456 aa).

The (6S)-5-formyl-5,6,7,8-tetrahydrofolate site is built by Arg24, Glu81, and Lys120. The TrmE-type G domain maps to 216–379 (GMTVVIAGRP…LREHLKACMG (164 aa)). Asn226 contacts K(+). GTP is bound by residues 226 to 231 (NAGKSS), 245 to 251 (TEIAGTT), 270 to 273 (DTAG), 335 to 338 (NKAD), and 359 to 361 (SAR). Ser230 contributes to the Mg(2+) binding site. The K(+) site is built by Thr245, Ile247, and Thr250. Thr251 lines the Mg(2+) pocket. Lys456 contributes to the (6S)-5-formyl-5,6,7,8-tetrahydrofolate binding site.

Belongs to the TRAFAC class TrmE-Era-EngA-EngB-Septin-like GTPase superfamily. TrmE GTPase family. Homodimer. Heterotetramer of two MnmE and two MnmG subunits. The cofactor is K(+).

The protein resides in the cytoplasm. In terms of biological role, exhibits a very high intrinsic GTPase hydrolysis rate. Involved in the addition of a carboxymethylaminomethyl (cmnm) group at the wobble position (U34) of certain tRNAs, forming tRNA-cmnm(5)s(2)U34. The sequence is that of tRNA modification GTPase MnmE from Pseudomonas syringae pv. syringae (strain B728a).